The sequence spans 161 residues: Putative pre-16S rRNA nuclease (161 aa).

Belongs to the YqgF nuclease family.

Its subcellular location is the cytoplasm. Functionally, could be a nuclease involved in processing of the 5'-end of pre-16S rRNA. The sequence is that of Putative pre-16S rRNA nuclease from Methylocella silvestris (strain DSM 15510 / CIP 108128 / LMG 27833 / NCIMB 13906 / BL2).